The sequence spans 470 residues: Xaa-Pro aminopeptidase 2 (470 aa).

Mn(2+) is bound by residues Asp287, Asp299, His382, Glu413, and Glu437.

The protein belongs to the peptidase M24B family. Homodimer. The cofactor is Mn(2+).

The catalysed reaction is Release of any N-terminal amino acid, including proline, that is linked to proline, even from a dipeptide or tripeptide.. This is Xaa-Pro aminopeptidase 2 (pepP2) from Streptomyces coelicolor (strain ATCC BAA-471 / A3(2) / M145).